Reading from the N-terminus, the 185-residue chain is Elongation factor P 1 (185 aa).

The protein belongs to the elongation factor P family.

It localises to the cytoplasm. Its pathway is protein biosynthesis; polypeptide chain elongation. In terms of biological role, involved in peptide bond synthesis. Stimulates efficient translation and peptide-bond synthesis on native or reconstituted 70S ribosomes in vitro. Probably functions indirectly by altering the affinity of the ribosome for aminoacyl-tRNA, thus increasing their reactivity as acceptors for peptidyl transferase. The sequence is that of Elongation factor P 1 (efp1) from Chlamydia pneumoniae (Chlamydophila pneumoniae).